A 100-amino-acid polypeptide reads, in one-letter code: Protamine-2 (100 aa).

A disordered region spans residues 1-45 (MVRYHVRSPSERPHREYRQLVNGQEQGRHGQEEQGMSAEGVEGYG). 3 positions are modified to phosphoserine: S8, S10, and S37. Residues 8–18 (SPSERPHREYR) show a composition bias toward basic and acidic residues.

This sequence belongs to the protamine P2 family. Interacts with TDRP. Post-translationally, proteolytic processing into mature chains is required for histone eviction during spermatogenesis. Transition proteins (TNP1 and TNP2) are required for processing. As to expression, testis.

The protein localises to the nucleus. It is found in the chromosome. Functionally, protamines substitute for histones in the chromatin of sperm during the haploid phase of spermatogenesis. They compact sperm DNA into a highly condensed, stable and inactive complex. The chain is Protamine-2 (PRM2) from Alouatta seniculus (Red howler monkey).